We begin with the raw amino-acid sequence, 563 residues long: Arginine--tRNA ligase (563 aa).

The short motif at Pro-121 to His-131 is the 'HIGH' region element.

This sequence belongs to the class-I aminoacyl-tRNA synthetase family. As to quaternary structure, monomer.

The protein localises to the cytoplasm. It catalyses the reaction tRNA(Arg) + L-arginine + ATP = L-arginyl-tRNA(Arg) + AMP + diphosphate. This chain is Arginine--tRNA ligase, found in Streptococcus pyogenes serotype M49 (strain NZ131).